The chain runs to 159 residues: Probable inactive acireductone dioxygenase 2 (159 aa).

The protein belongs to the acireductone dioxygenase (ARD) family.

It localises to the cytoplasm. Its subcellular location is the nucleus. Probable inactive acireductone dioxygenase. The sequence is that of Probable inactive acireductone dioxygenase 2 from Caenorhabditis briggsae.